A 308-amino-acid polypeptide reads, in one-letter code: Cytochrome b (308 aa).

The next 4 membrane-spanning stretches (helical) occupy residues 1–21 (FGSL…LLAM), 45–66 (WLIR…YLHI), 81–101 (WNIG…GYVL), and 146–166 (FFAL…IHLT). Positions 51 and 65 each coordinate heme b. Residues His-150 and His-164 each contribute to the heme b site. Residue His-169 participates in a ubiquinone binding. Helical transmembrane passes span 194-214 (TKDA…AMFS), 256-276 (LGGV…PLLH), and 288-308 (LSQF…WIGS).

The protein belongs to the cytochrome b family. As to quaternary structure, the cytochrome bc1 complex contains 11 subunits: 3 respiratory subunits (MT-CYB, CYC1 and UQCRFS1), 2 core proteins (UQCRC1 and UQCRC2) and 6 low-molecular weight proteins (UQCRH/QCR6, UQCRB/QCR7, UQCRQ/QCR8, UQCR10/QCR9, UQCR11/QCR10 and a cleavage product of UQCRFS1). This cytochrome bc1 complex then forms a dimer. Heme b is required as a cofactor.

It is found in the mitochondrion inner membrane. In terms of biological role, component of the ubiquinol-cytochrome c reductase complex (complex III or cytochrome b-c1 complex) that is part of the mitochondrial respiratory chain. The b-c1 complex mediates electron transfer from ubiquinol to cytochrome c. Contributes to the generation of a proton gradient across the mitochondrial membrane that is then used for ATP synthesis. This is Cytochrome b (MT-CYB) from Zaratornis stresemanni (White-cheeked cotinga).